The chain runs to 392 residues: GDP-mannose transporter (392 aa).

The interval M1–A40 is disordered. At M1 to G55 the chain is on the cytoplasmic side. Over residues R29 to Q38 the composition is skewed to polar residues. A helical transmembrane segment spans residues A56–V76. The Lumenal portion of the chain corresponds to S77–E80. Residues W81–I101 form a helical membrane-spanning segment. Residues C102–K121 lie on the Cytoplasmic side of the membrane. The helical transmembrane segment at W122–S144 threads the bilayer. Residues V145 to T149 lie on the Lumenal side of the membrane. The helical transmembrane segment at I150–G168 threads the bilayer. Residues G169–M174 are Cytoplasmic-facing. The helical transmembrane segment at A175–V198 threads the bilayer. Over E199–T213 the chain is Lumenal. Residues L214–G234 traverse the membrane as a helical segment. Topologically, residues M235 to D248 are cytoplasmic. A helical membrane pass occupies residues T249 to E269. The Lumenal portion of the chain corresponds to D270–S287. The chain crosses the membrane as a helical span at residues L288 to W308. Residues C309–T316 lie on the Cytoplasmic side of the membrane. The chain crosses the membrane as a helical span at residues T317–F337. Residues D338 to T342 are Lumenal-facing. Residues F343–W361 form a helical membrane-spanning segment. The Cytoplasmic segment spans residues S362–A392.

Belongs to the TPT transporter family. SLC35D subfamily. In terms of assembly, homooligomer.

The protein localises to the golgi apparatus membrane. Its subcellular location is the cytoplasmic vesicle membrane. It is found in the endoplasmic reticulum membrane. Functionally, involved in the import of GDP-mannose from the cytoplasm into the Golgi lumen. The chain is GDP-mannose transporter (vrg-4) from Neurospora crassa (strain ATCC 24698 / 74-OR23-1A / CBS 708.71 / DSM 1257 / FGSC 987).